Here is a 607-residue protein sequence, read N- to C-terminus: Elongation factor 4 (607 aa).

The 183-residue stretch at 11–193 folds into the tr-type G domain; the sequence is SKIRNFSIIA…QIVEKVPAPT (183 aa). Residues 23 to 28 and 140 to 143 each bind GTP; these read DHGKST and NKID.

Belongs to the TRAFAC class translation factor GTPase superfamily. Classic translation factor GTPase family. LepA subfamily.

It localises to the cell membrane. It carries out the reaction GTP + H2O = GDP + phosphate + H(+). Its function is as follows. Required for accurate and efficient protein synthesis under certain stress conditions. May act as a fidelity factor of the translation reaction, by catalyzing a one-codon backward translocation of tRNAs on improperly translocated ribosomes. Back-translocation proceeds from a post-translocation (POST) complex to a pre-translocation (PRE) complex, thus giving elongation factor G a second chance to translocate the tRNAs correctly. Binds to ribosomes in a GTP-dependent manner. This is Elongation factor 4 from Bacillus cereus (strain AH820).